We begin with the raw amino-acid sequence, 304 residues long: Acetyl-coenzyme A carboxylase carboxyl transferase subunit beta (304 aa).

In terms of domain architecture, CoA carboxyltransferase N-terminal spans 23–292; that stretch reads VWTKCDSCGQ…PNPEAPREGV (270 aa). Residues cysteine 27, cysteine 30, cysteine 46, and cysteine 49 each contribute to the Zn(2+) site. Residues 27–49 form a C4-type zinc finger; that stretch reads CDSCGQVLYRAELERNLEVCPKC. Positions 285-304 are disordered; sequence PEAPREGVVVPPVPDQEPEA. The segment covering 295 to 304 has biased composition (pro residues); that stretch reads PPVPDQEPEA.

It belongs to the AccD/PCCB family. In terms of assembly, acetyl-CoA carboxylase is a heterohexamer composed of biotin carboxyl carrier protein (AccB), biotin carboxylase (AccC) and two subunits each of ACCase subunit alpha (AccA) and ACCase subunit beta (AccD). It depends on Zn(2+) as a cofactor.

It localises to the cytoplasm. It catalyses the reaction N(6)-carboxybiotinyl-L-lysyl-[protein] + acetyl-CoA = N(6)-biotinyl-L-lysyl-[protein] + malonyl-CoA. It functions in the pathway lipid metabolism; malonyl-CoA biosynthesis; malonyl-CoA from acetyl-CoA: step 1/1. Its function is as follows. Component of the acetyl coenzyme A carboxylase (ACC) complex. Biotin carboxylase (BC) catalyzes the carboxylation of biotin on its carrier protein (BCCP) and then the CO(2) group is transferred by the transcarboxylase to acetyl-CoA to form malonyl-CoA. In Escherichia coli O6:H1 (strain CFT073 / ATCC 700928 / UPEC), this protein is Acetyl-coenzyme A carboxylase carboxyl transferase subunit beta.